The primary structure comprises 95 residues: Large ribosomal subunit protein uL23 (95 aa).

Belongs to the universal ribosomal protein uL23 family. As to quaternary structure, part of the 50S ribosomal subunit. Contacts protein L29, and trigger factor when it is bound to the ribosome.

In terms of biological role, one of the early assembly proteins it binds 23S rRNA. One of the proteins that surrounds the polypeptide exit tunnel on the outside of the ribosome. Forms the main docking site for trigger factor binding to the ribosome. The protein is Large ribosomal subunit protein uL23 of Bacillus licheniformis (strain ATCC 14580 / DSM 13 / JCM 2505 / CCUG 7422 / NBRC 12200 / NCIMB 9375 / NCTC 10341 / NRRL NRS-1264 / Gibson 46).